Consider the following 853-residue polypeptide: Aminotransferase PigE (853 aa).

503-504 is a binding site for pyridoxal 5'-phosphate; the sequence is GT. Lysine 645 is subject to N6-(pyridoxal phosphate)lysine. Pyridoxal 5'-phosphate is bound at residue threonine 680.

The protein belongs to the class-III pyridoxal-phosphate-dependent aminotransferase family. In terms of assembly, homodimer. Requires pyridoxal 5'-phosphate as cofactor.

Its pathway is antibiotic biosynthesis; prodigiosin biosynthesis. Involved in the biosynthesis of 2-methyl-3-n-amyl-pyrrole (MAP), one of the terminal products involved in the biosynthesis of the red antibiotic prodigiosin (Pig). Catalyzes the transamination to the aldehyde group of 3-acetyloctanal, resulting in an aminoketone, which spontaneously cyclizes to yield the dihydro form of MAP (H2MAP). This Serratia sp. (strain ATCC 39006) (Prodigiosinella confusarubida) protein is Aminotransferase PigE.